The chain runs to 345 residues: Phosphoribosylformylglycinamidine cyclo-ligase (345 aa).

This sequence belongs to the AIR synthase family.

It localises to the cytoplasm. It catalyses the reaction 2-formamido-N(1)-(5-O-phospho-beta-D-ribosyl)acetamidine + ATP = 5-amino-1-(5-phospho-beta-D-ribosyl)imidazole + ADP + phosphate + H(+). It participates in purine metabolism; IMP biosynthesis via de novo pathway; 5-amino-1-(5-phospho-D-ribosyl)imidazole from N(2)-formyl-N(1)-(5-phospho-D-ribosyl)glycinamide: step 2/2. The protein is Phosphoribosylformylglycinamidine cyclo-ligase of Klebsiella pneumoniae (strain 342).